The chain runs to 397 residues: Elongation factor Tu (397 aa).

The region spanning 10-206 (KPHVNIGTIG…AVDTSIPQPE (197 aa)) is the tr-type G domain. Residues 19–26 (GHIDHGKT) are G1. GTP is bound at residue 19–26 (GHIDHGKT). Thr-26 provides a ligand contact to Mg(2+). The G2 stretch occupies residues 62-66 (GITIS). A G3 region spans residues 83-86 (DCPG). Residues 83 to 87 (DCPGH) and 138 to 141 (NKSD) each bind GTP. Residues 138–141 (NKSD) are G4. The tract at residues 176 to 178 (SAL) is G5.

Belongs to the TRAFAC class translation factor GTPase superfamily. Classic translation factor GTPase family. EF-Tu/EF-1A subfamily. As to quaternary structure, monomer.

The protein localises to the cytoplasm. The enzyme catalyses GTP + H2O = GDP + phosphate + H(+). Functionally, GTP hydrolase that promotes the GTP-dependent binding of aminoacyl-tRNA to the A-site of ribosomes during protein biosynthesis. The protein is Elongation factor Tu of Salinispora tropica (strain ATCC BAA-916 / DSM 44818 / JCM 13857 / NBRC 105044 / CNB-440).